The following is a 471-amino-acid chain: Cysteine--tRNA ligase (471 aa).

Cys-29 serves as a coordination point for Zn(2+). Residues 31–41 (LTVQSEPHVGH) carry the 'HIGH' region motif. Residues Cys-215, His-240, and Glu-244 each contribute to the Zn(2+) site. The short motif at 271–275 (KMSKS) is the 'KMSKS' region element. Residue Lys-274 coordinates ATP.

The protein belongs to the class-I aminoacyl-tRNA synthetase family. In terms of assembly, monomer. Requires Zn(2+) as cofactor.

Its subcellular location is the cytoplasm. The catalysed reaction is tRNA(Cys) + L-cysteine + ATP = L-cysteinyl-tRNA(Cys) + AMP + diphosphate. This Nocardioides sp. (strain ATCC BAA-499 / JS614) protein is Cysteine--tRNA ligase.